The sequence spans 233 residues: Large ribosomal subunit protein uL1 (233 aa).

It belongs to the universal ribosomal protein uL1 family. In terms of assembly, part of the 50S ribosomal subunit.

Functionally, binds directly to 23S rRNA. The L1 stalk is quite mobile in the ribosome, and is involved in E site tRNA release. In terms of biological role, protein L1 is also a translational repressor protein, it controls the translation of the L11 operon by binding to its mRNA. In Geobacillus stearothermophilus (Bacillus stearothermophilus), this protein is Large ribosomal subunit protein uL1.